The sequence spans 252 residues: Chitooligosaccharide deacetylase (252 aa).

2 residues coordinate Mg(2+): histidine 61 and histidine 125.

It belongs to the YdjC deacetylase family. ChbG subfamily. Homodimer. Mg(2+) serves as cofactor.

It is found in the cytoplasm. The enzyme catalyses N,N'-diacetylchitobiose + H2O = N-acetyl-beta-D-glucosaminyl-(1-&gt;4)-D-glucosamine + acetate. The catalysed reaction is diacetylchitobiose-6'-phosphate + H2O = N'-monoacetylchitobiose-6'-phosphate + acetate. The protein operates within glycan degradation; chitin degradation. Its function is as follows. Involved in the degradation of chitin. ChbG is essential for growth on the acetylated chitooligosaccharides chitobiose and chitotriose but is dispensable for growth on cellobiose and chitosan dimer, the deacetylated form of chitobiose. Deacetylation of chitobiose-6-P and chitotriose-6-P is necessary for both the activation of the chb promoter by the regulatory protein ChbR and the hydrolysis of phosphorylated beta-glucosides by the phospho-beta-glucosidase ChbF. Catalyzes the removal of only one acetyl group from chitobiose-6-P to yield monoacetylchitobiose-6-P, the inducer of ChbR and the substrate of ChbF. In Salmonella typhi, this protein is Chitooligosaccharide deacetylase.